The following is a 285-amino-acid chain: Protease HtpX homolog (285 aa).

2 helical membrane passes run 7–27 and 30–50; these read TAMLMAAITALFIVIGGMIGG and GMTIALLFALGMNFFSYWFSD. H131 contributes to the Zn(2+) binding site. The active site involves E132. H135 provides a ligand contact to Zn(2+). The next 2 membrane-spanning stretches (helical) occupy residues 146–166 and 177–197; these read ITATMAGAISALANFAMFFGG and IAGIAVALLAPIAGALIQMAI. A Zn(2+)-binding site is contributed by E202.

It belongs to the peptidase M48B family. The cofactor is Zn(2+).

It localises to the cell inner membrane. The chain is Protease HtpX homolog from Burkholderia cenocepacia (strain HI2424).